A 619-amino-acid polypeptide reads, in one-letter code: CREB-regulated transcription coactivator 3 (619 aa).

The segment at 1-103 (MAASPGSGSA…LVERPSRNRF (103 aa)) is required for interaction with HTLV-1 TAX. Serine 4 and serine 62 each carry phosphoserine. The segment at 103-150 (FHPLHRRSGDKPGRQFDGSAFGANYSSQPLDESWPRQQPPWKDEKHPG) is disordered. Position 160 is a phosphothreonine (threonine 160). A Phosphoserine; by SIK2 modification is found at serine 162. Residues 165–175 (ALHTSALSTKP) show a composition bias toward polar residues. Residues 165–185 (ALHTSALSTKPQDPYGGGGQS) are disordered. Lysine 232 participates in a covalent cross-link: Glycyl lysine isopeptide (Lys-Gly) (interchain with G-Cter in SUMO2). Phosphoserine is present on residues serine 273, serine 329, serine 332, serine 370, serine 391, serine 396, serine 410, and serine 443. Positions 375–431 (STTNLSGPSRRRQPPVSPLTLSPGPEAHQGFSRQLSSTSPLAPYPTSQMVSSDRSQL) are disordered. Residues 380–401 (SGPSRRRQPPVSPLTLSPGPEA) form a required for interaction with PPP2CA and PPP2R1A region. Over residues 405–431 (FSRQLSSTSPLAPYPTSQMVSSDRSQL) the composition is skewed to polar residues.

This sequence belongs to the TORC family. In terms of assembly, binding, as a tetramer, through its N-terminal region, with the bZIP domain of CREB1 enhances recruitment of TAF4 to the promoter. 'Arg-314' in the bZIP domain of CREB1 is essential for this interaction. Interacts (when phosphorylated at Ser-162 and Se-273) with 14-3-3 proteins. Interacts with YWHAE. Interacts (when phosphorylated at Ser-391) with phosphatase PP2A catalytic subunit PPP2CA and regulatory subunits PPP2R1A and PPP2R2A. Interacts, via the N-terminal with the ankyrin repeats of BCL3, to form a complex with CREB1 on CRE and TxRE responsive elements and represses HTLV-1 LTR-mediated transcription. (Microbial infection) Interacts with HTLV-1 protein Tax; this interaction enhances tax transcriptional activity. Phosphorylation/dephosphorylation states of Ser-273 are required for regulating transduction of CREB activity. CRTCs/TORCs are inactive when phosphorylated, and active when dephosphorylated at this site. May be phosphorylated at Ser-391 by MAPK3/ERK1 and/or MAPK1/ERK2 or by some cyclin-dependent kinases such as CDK1,CDK2 or CDK5. Following adenylyl cyclase activation, dephosphorylated at Ser-162 and Ser-273 resulting in its dissociation from 14-3-3 proteins probably promoting CRTC3 translocation into the nucleus. In terms of tissue distribution, predominantly expressed in B and T lymphocytes. Highest levels in lung. Also expressed in brain, colon, heart, kidney, ovary, and prostate. Weak expression in liver, pancreas, muscle, small intestine, spleen and stomach.

Its subcellular location is the nucleus. The protein localises to the cytoplasm. Functionally, transcriptional coactivator for CREB1 which activates transcription through both consensus and variant cAMP response element (CRE) sites. Acts as a coactivator, in the SIK/TORC signaling pathway, being active when dephosphorylated and acts independently of CREB1 'Ser-133' phosphorylation. Enhances the interaction of CREB1 with TAF4. Regulates the expression of specific CREB-activated genes such as the steroidogenic gene, StAR. Potent coactivator of PPARGC1A and inducer of mitochondrial biogenesis in muscle cells. Also coactivator for TAX activation of the human T-cell leukemia virus type 1 (HTLV-1) long terminal repeats (LTR). This chain is CREB-regulated transcription coactivator 3 (CRTC3), found in Homo sapiens (Human).